Here is a 120-residue protein sequence, read N- to C-terminus: Large ribosomal subunit protein bL20 (120 aa).

This sequence belongs to the bacterial ribosomal protein bL20 family.

Functionally, binds directly to 23S ribosomal RNA and is necessary for the in vitro assembly process of the 50S ribosomal subunit. It is not involved in the protein synthesizing functions of that subunit. The chain is Large ribosomal subunit protein bL20 from Desulfitobacterium hafniense (strain DSM 10664 / DCB-2).